A 247-amino-acid chain; its full sequence is Peroxisomal membrane protein 11A (247 aa).

Topologically, residues 1–83 (MDAFIRFTNQ…SVRATDLVPR (83 aa)) are cytoplasmic. Residues 84–105 (ICLTLASLNRVIYFICDTVLFV) traverse the membrane as a helical segment. At 106–219 (RSTGLASGVN…DQLGIYKSNP (114 aa)) the chain is on the lumenal side. Residues 220–239 (GIIGLGGLVSSVAGIITVAY) form a helical membrane-spanning segment. The required for homodimerization, interaction with PEX11G, and peroxisomal localization stretch occupies residues 220–239 (GIIGLGGLVSSVAGIITVAY). Residues 240 to 247 (PQMKLKTQ) lie on the Cytoplasmic side of the membrane.

It belongs to the peroxin-11 family. In terms of assembly, homodimer. Heterodimer with PEX11G. Probably interacts with COPB2 and COPA. Interacts with PEX19. Interacts with FIS1.

The protein localises to the peroxisome membrane. May be involved in peroxisomal proliferation and may regulate peroxisomes division. May mediate binding of coatomer proteins to the peroxisomal membrane. Promotes membrane protrusion and elongation on the peroxisomal surface. This chain is Peroxisomal membrane protein 11A (PEX11A), found in Bos taurus (Bovine).